The sequence spans 98 residues: Large ribosomal subunit protein bL21 (98 aa).

The protein belongs to the bacterial ribosomal protein bL21 family. Part of the 50S ribosomal subunit. Contacts protein L20.

Its function is as follows. This protein binds to 23S rRNA in the presence of protein L20. The chain is Large ribosomal subunit protein bL21 from Aquifex aeolicus (strain VF5).